Reading from the N-terminus, the 611-residue chain is Zinc metalloproteinase-disintegrin-like MTP9 (611 aa).

Positions 1-20 (MIEVLLVTICFTVFPYQGSS) are cleaved as a signal peptide. A propeptide spanning residues 21–191 (IILESGNVND…DEPIEKISQL (171 aa)) is cleaved from the precursor. Positions 205 to 401 (KYIELYVVVD…VRPQCILNKP (197 aa)) constitute a Peptidase M12B domain. Ca(2+) is bound at residue Glu208. N-linked (GlcNAc...) asparagine glycosylation is present at Asn282. Asp292 lines the Ca(2+) pocket. Intrachain disulfides connect Cys316–Cys396, Cys356–Cys380, and Cys358–Cys363. His341, His345, and His351 together coordinate Zn(2+). Ca(2+)-binding residues include Cys396, Asn399, Asn414, Phe416, Glu418, Glu421, and Asp424. A Disintegrin domain is found at 409 to 493 (PPVCGNYFVE…ECPTDSFQRN (85 aa)). 15 cysteine pairs are disulfide-bonded: Cys412-Cys441, Cys423-Cys436, Cys425-Cys431, Cys435-Cys456, Cys447-Cys453, Cys452-Cys478, Cys465-Cys485, Cys472-Cys504, Cys497-Cys509, Cys516-Cys566, Cys531-Cys573, Cys541-Cys575, Cys544-Cys554, Cys561-Cys599, and Cys593-Cys604. The D/ECD-tripeptide motif lies at 471-473 (DCD). Positions 473, 474, 476, and 488 each coordinate Ca(2+). N-linked (GlcNAc...) asparagine glycans are attached at residues Asn548 and Asn570.

Belongs to the venom metalloproteinase (M12B) family. P-III subfamily. As to quaternary structure, monomer. Requires Zn(2+) as cofactor. As to expression, expressed by the venom gland.

It localises to the secreted. Snake venom zinc metalloproteinase that may impair hemostasis in the prey. This chain is Zinc metalloproteinase-disintegrin-like MTP9, found in Drysdalia coronoides (White-lipped snake).